The following is a 57-amino-acid chain: UPF0391 membrane protein BRADO2787 (57 aa).

A run of 2 helical transmembrane segments spans residues 6–26 and 35–55; these read WALL…TGVS and ILFY…LTIF.

It belongs to the UPF0391 family.

The protein resides in the cell membrane. The protein is UPF0391 membrane protein BRADO2787 of Bradyrhizobium sp. (strain ORS 278).